We begin with the raw amino-acid sequence, 829 residues long: E3 ubiquitin-protein ligase Jade-2 (829 aa).

The disordered stretch occupies residues 1 to 52 (MEEKRRKYSISSDNSDTTDGHVTSTSASRCSKLPSSTKSGWPRQNEKKPSEV). Phosphoserine is present on residues Ser9 and Ser15. Over residues 9–39 (SISSDNSDTTDGHVTSTSASRCSKLPSSTKS) the composition is skewed to polar residues. N6-acetyllysine is present on residues Lys32 and Lys38. Ser117 carries the phosphoserine modification. The PHD-type 1 zinc-finger motif lies at 199–249 (DVVCDVCRSPEGEDGNEMVFCDKCNVCVHQACYGILKVPTGSWLCRTCALG). The C2HC pre-PHD-type zinc finger occupies 251–285 (QPKCLLCPKRGGALKPTRSGTKWVHVSCALWIPEV). Lys298 carries the post-translational modification N6-acetyllysine. Residues 309 to 365 (LSCSLCKECTGTCIQCSMPSCITAFHVTCAFDRGLEMRTILADNDEVKFKSLCQEHS) form a PHD-type 2 zinc finger. Disordered stretches follow at residues 362-383 (QEHS…PSQA), 517-555 (REPS…AGPE), and 622-817 (SFMR…REAG). The segment covering 522 to 535 (RRSKGKKNDSKRKG) has biased composition (basic residues). The span at 536–552 (REGPKGSSPEKKEKVKA) shows a compositional bias: basic and acidic residues. Residues 637–650 (KARGRTRLPAKKKP) are compositionally biased toward basic residues. The span at 776-786 (ERPKVSLHFDT) shows a compositional bias: basic and acidic residues. The span at 792–806 (FSDEEMSDSEVEAED) shows a compositional bias: acidic residues.

It belongs to the JADE family. As to quaternary structure, component of the HBO1 complex composed at least of ING4 or ING5, MYST2/HBO1, MEAF6, and one of JADE1, JADE2 and JADE3. Interacts (via C-terminus) with KDM1A (via AOD/Tower domain).

The catalysed reaction is S-ubiquitinyl-[E2 ubiquitin-conjugating enzyme]-L-cysteine + [acceptor protein]-L-lysine = [E2 ubiquitin-conjugating enzyme]-L-cysteine + N(6)-ubiquitinyl-[acceptor protein]-L-lysine.. It participates in protein modification; protein ubiquitination. Functionally, scaffold subunit of some HBO1 complexes, which have a histone H4 acetyltransferase activity. Acts as a E3 ubiquitin-protein ligase mediating the ubiquitination and subsequent proteasomal degradation of target protein histone demethylase KDM1A. Also acts as a ubiquitin ligase E3 toward itself. Positive regulator of neurogenesis. This chain is E3 ubiquitin-protein ligase Jade-2 (Jade2), found in Mus musculus (Mouse).